The following is a 65-amino-acid chain: Large ribosomal subunit protein bL35 (65 aa).

The tract at residues 1–52 is disordered; that stretch reads MPKMKSNRAAAKRFKRTANGGFKSGNSFTSHRFHGKTKKQRRQLRGLSMMDK. Over residues 31-44 the composition is skewed to basic residues; sequence HRFHGKTKKQRRQL.

It belongs to the bacterial ribosomal protein bL35 family.

This is Large ribosomal subunit protein bL35 from Limosilactobacillus reuteri (strain DSM 20016) (Lactobacillus reuteri).